The sequence spans 568 residues: Urease subunit alpha (568 aa).

A Urease domain is found at Gly131–Tyr568. His136, His138, and Lys219 together coordinate Ni(2+). Lys219 carries the post-translational modification N6-carboxylysine. Substrate is bound at residue His221. Ni(2+) is bound by residues His248 and His274. His322 functions as the Proton donor in the catalytic mechanism. Asp362 contacts Ni(2+).

This sequence belongs to the metallo-dependent hydrolases superfamily. Urease alpha subunit family. Heterotrimer of UreA (gamma), UreB (beta) and UreC (alpha) subunits. Three heterotrimers associate to form the active enzyme. Ni cation is required as a cofactor. Post-translationally, carboxylation allows a single lysine to coordinate two nickel ions.

The protein localises to the cytoplasm. It catalyses the reaction urea + 2 H2O + H(+) = hydrogencarbonate + 2 NH4(+). The protein operates within nitrogen metabolism; urea degradation; CO(2) and NH(3) from urea (urease route): step 1/1. The sequence is that of Urease subunit alpha from Cereibacter sphaeroides (strain ATCC 17025 / ATH 2.4.3) (Rhodobacter sphaeroides).